Consider the following 69-residue polypeptide: MKASEIKGLSRDDLLKREKDAKEELFNLRFQQAAGQLENTARLSTVKKDIARIKTELWAQEIAAEKAKA.

It belongs to the universal ribosomal protein uL29 family.

The chain is Large ribosomal subunit protein uL29 from Oenococcus oeni (strain ATCC BAA-331 / PSU-1).